The following is a 389-amino-acid chain: Ribosomal RNA large subunit methyltransferase M (389 aa).

The segment covering M1–T13 has biased composition (polar residues). Positions M1–S24 are disordered. Residues S214, A247–G250, D266, D286, and D302 contribute to the S-adenosyl-L-methionine site. Catalysis depends on K331, which acts as the Proton acceptor.

The protein belongs to the class I-like SAM-binding methyltransferase superfamily. RNA methyltransferase RlmE family. RlmM subfamily. In terms of assembly, monomer.

It localises to the cytoplasm. It carries out the reaction cytidine(2498) in 23S rRNA + S-adenosyl-L-methionine = 2'-O-methylcytidine(2498) in 23S rRNA + S-adenosyl-L-homocysteine + H(+). Catalyzes the 2'-O-methylation at nucleotide C2498 in 23S rRNA. This Hahella chejuensis (strain KCTC 2396) protein is Ribosomal RNA large subunit methyltransferase M.